The following is a 283-amino-acid chain: Pre-mRNA-splicing factor CWC23 (283 aa).

A J domain is found at 15–87 (NLYDVLELPT…DVRPHYDRWL (73 aa)).

This sequence belongs to the DnaJ family. In terms of assembly, belongs to the CWC complex (or CEF1-associated complex), a spliceosome sub-complex reminiscent of a late-stage spliceosome composed of the U2, U5 and U6 snRNAs and at least BUD13, BUD31, BRR2, CDC40, CEF1, CLF1, CUS1, CWC2, CWC15, CWC21, CWC22, CWC23, CWC24, CWC25, CWC27, ECM2, HSH155, IST3, ISY1, LEA1, MSL1, NTC20, PRP8, PRP9, PRP11, PRP19, PRP21, PRP22, PRP45, PRP46, SLU7, SMB1, SMD1, SMD2, SMD3, SMX2, SMX3, SNT309, SNU114, SPP2, SYF1, SYF2, RSE1 and YJU2.

It is found in the cytoplasm. It localises to the nucleus. In terms of biological role, involved in pre-mRNA splicing. May be involved in endoplasmic reticulum-associated protein degradation (ERAD) and required for growth at low and high temperatures. The sequence is that of Pre-mRNA-splicing factor CWC23 (CWC23) from Saccharomyces cerevisiae (strain ATCC 204508 / S288c) (Baker's yeast).